We begin with the raw amino-acid sequence, 278 residues long: Octanoyl-[GcvH]:protein N-octanoyltransferase (278 aa).

One can recognise a BPL/LPL catalytic domain in the interval 41-247; the sequence is LVSPPTIRTW…LLHRLAGEVH (207 aa). Residue C146 is the Acyl-thioester intermediate of the active site.

The protein belongs to the octanoyltransferase LipL family.

It catalyses the reaction N(6)-octanoyl-L-lysyl-[glycine-cleavage complex H protein] + L-lysyl-[lipoyl-carrier protein] = N(6)-octanoyl-L-lysyl-[lipoyl-carrier protein] + L-lysyl-[glycine-cleavage complex H protein]. Its pathway is protein modification; protein lipoylation via endogenous pathway; protein N(6)-(lipoyl)lysine from octanoyl-[acyl-carrier-protein]. In terms of biological role, catalyzes the amidotransfer (transamidation) of the octanoyl moiety from octanoyl-GcvH to the lipoyl domain of the E2 subunit of lipoate-dependent enzymes. This chain is Octanoyl-[GcvH]:protein N-octanoyltransferase, found in Lysinibacillus sphaericus (strain C3-41).